The primary structure comprises 321 residues: Nucleus-vacuole junction protein 1 (321 aa).

The signal sequence occupies residues 1–22 (MTRPPLVRGIFSLGLSVAVLKG). Positions 73–125 (ELSWRKVFNFISRQSSELDTRIYVLILLLSFLLPIAWTVLDGDRETTLEDKDN) are TSC13-binding. Residues 94 to 114 (IYVLILLLSFLLPIAWTVLDG) form a helical membrane-spanning segment. The segment at 139–195 (KHYNDGERAVLQFGKNRSEPIILSYKDMNVLEGEHEFTSKEEHSNSHLTSKSENALN) is OSH1-binding. Phosphoserine occurs at positions 156 and 199. The segment at 211–275 (LEEDKNEPNG…SLKSSTSFPI (65 aa)) is disordered. The VAC8-binding stretch occupies residues 233–321 (DCSSSSEVES…EQAYSQPFRY (89 aa)). Basic and acidic residues predominate over residues 242–262 (SQSKCRKESTAEPDSLSRDTR). Residues 263–272 (TTSSLKSSTS) show a composition bias toward low complexity. A phosphoserine mark is found at S285 and S298. The segment at 299–321 (PTKSSNLDAQVNTEQAYSQPFRY) is disordered.

As to quaternary structure, interacts with OSH1, TSC13 and VAC8.

The protein resides in the nucleus outer membrane. Functionally, involved in the formation of nucleus-vacuole junctions (NVJs) during piecemeal microautophagy of the nucleus (PMN). NVJs are interorganelle interfaces mediated by NVJ1 in the nuclear envelope and VAC8 on the vacuole membrane. Together, NVJ1 and VAC8 form Velcro-like patches through which teardrop-like portions of the nucleus are pinched off into the vacuolar lumen and degraded by the PMN process. Also acts as an outer-nuclear membrane receptor for OSH1 and TSC13. This Saccharomyces cerevisiae (strain ATCC 204508 / S288c) (Baker's yeast) protein is Nucleus-vacuole junction protein 1 (NVJ1).